A 228-amino-acid polypeptide reads, in one-letter code: Ankyrin repeat domain-containing protein 46 (228 aa).

ANK repeat units follow at residues 11-40 (QTNVPLLQACIDGDFNYSKRLLESGFDPNI), 44-73 (RGRTGLHLAAARGNVDICQLLHKFGADLLA), 77-103 (QGNTALHLCGHVDTIQFLVSNGLKIDI), and 107-138 (QGATPLVLAKRRGVNKDVIRLLESLEEQEVKG). Residues 195 to 215 (VLLLIFVIALLSLGIAYYVSG) form a helical membrane-spanning segment.

The protein resides in the membrane. The protein is Ankyrin repeat domain-containing protein 46 (ANKRD46) of Bos taurus (Bovine).